Reading from the N-terminus, the 640-residue chain is Protein UL35 (640 aa).

Disordered regions lie at residues 353–373 (ERGE…PREA), 500–571 (ASSS…PRQR), and 586–640 (AYSH…LRHL). Acidic residues predominate over residues 358 to 367 (GDEDEEQEND). The span at 500–562 (ASSSSASSSS…LSGSHGISSA (63 aa)) shows a compositional bias: low complexity. Positions 588–598 (SHHRRHRRRRS) are enriched in basic residues. Residues 631-640 (DDLAENLRHL) are compositionally biased toward basic and acidic residues.

Belongs to the herpesviridae pp85 family. As to quaternary structure, interacts with UL82. Interacts with isoform UL35A. Interacts with host UBP7; this interaction significantly inhibits the ability of USP7 to form nuclear bodies. Interacts with host DCAF1 (via C-terminus). Interacts with host SNX5; this interaction allows proper gB localization during viral assembly. Interacts with host TBK1; this interaction prevents type I interferon production. In terms of assembly, interacts with UL82. Interacts with isoform UL35. Interacts with host UBP7; this interaction significantly inhibits the ability of USP7 to form nuclear bodies. Interacts with host SNX5; this interaction allows proper gB localization during viral assembly.

The protein localises to the virion tegument. It is found in the host nucleus. Its subcellular location is the host cytoplasm. Functionally, plays important role in immediate-early gene expression through interaction with UL82. Forms nuclear bodies in host nucleus, independently of PML. In turn, UL35 nuclear bodies associate with and remodel PML bodies. Through interaction with host DCAF1, causes cells to accumulate in the G2 phase of the cell cycle by inducing a DNA damage response. Regulates viral assembly by controlling the localization of the essential gB through regulation of a retrograde transport pathway. This modulation occurs via binding and inhibition of host sorting nexin 5/SNX5. Also plays a role in the inhibition of pattern recognition receptor-mediated type I interferon signaling at the level of TBK1. In terms of biological role, promotes cytoplasmic UL82 accumulation and inhibits UL35-containing nuclear bodies formation. Regulates viral assembly by controlling the localization of the essential gB through regulation of a retrograde transport pathway. This modulation occurs via binding and inhibition of host sorting nexin 5/SNX5. In Homo sapiens (Human), this protein is Protein UL35 (UL35).